Consider the following 101-residue polypeptide: NADH-quinone oxidoreductase subunit K (101 aa).

Helical transmembrane passes span 4 to 24 (VGHY…GIFI), 29 to 49 (IIVI…NLVA), and 65 to 85 (FVLT…VIYF).

It belongs to the complex I subunit 4L family. NDH-1 is composed of 14 different subunits. Subunits NuoA, H, J, K, L, M, N constitute the membrane sector of the complex.

The protein localises to the cell inner membrane. It catalyses the reaction a quinone + NADH + 5 H(+)(in) = a quinol + NAD(+) + 4 H(+)(out). In terms of biological role, NDH-1 shuttles electrons from NADH, via FMN and iron-sulfur (Fe-S) centers, to quinones in the respiratory chain. The immediate electron acceptor for the enzyme in this species is believed to be ubiquinone. Couples the redox reaction to proton translocation (for every two electrons transferred, four hydrogen ions are translocated across the cytoplasmic membrane), and thus conserves the redox energy in a proton gradient. The chain is NADH-quinone oxidoreductase subunit K from Sphingopyxis alaskensis (strain DSM 13593 / LMG 18877 / RB2256) (Sphingomonas alaskensis).